A 176-amino-acid chain; its full sequence is Bifunctional protein PyrR (176 aa).

The PRPP-binding signature appears at 93–105 (VILVDDVLYTGRT).

It belongs to the purine/pyrimidine phosphoribosyltransferase family. PyrR subfamily. Homodimer and homohexamer; in equilibrium.

It carries out the reaction UMP + diphosphate = 5-phospho-alpha-D-ribose 1-diphosphate + uracil. Functionally, regulates transcriptional attenuation of the pyrimidine nucleotide (pyr) operon by binding in a uridine-dependent manner to specific sites on pyr mRNA. This disrupts an antiterminator hairpin in the RNA and favors formation of a downstream transcription terminator, leading to a reduced expression of downstream genes. In terms of biological role, also displays a weak uracil phosphoribosyltransferase activity which is not physiologically significant. The polypeptide is Bifunctional protein PyrR (Streptococcus mutans serotype c (strain ATCC 700610 / UA159)).